A 43-amino-acid chain; its full sequence is Potassium channel toxin gamma-KTx 4.3 (43 aa).

4 cysteine pairs are disulfide-bonded: Cys5/Cys23, Cys11/Cys34, Cys20/Cys39, and Cys24/Cys41.

The protein belongs to the ergtoxin family. Gamma-KTx 4 subfamily. As to expression, expressed by the venom gland.

It is found in the secreted. Its function is as follows. Reversibly blocks Kv11/ERG potassium channels. This Centruroides exilicauda (Bark scorpion) protein is Potassium channel toxin gamma-KTx 4.3.